Consider the following 547-residue polypeptide: Chaperonin GroEL (547 aa).

ATP is bound by residues 29–32 (TMGP), Lys50, 86–90 (DGTTT), Gly414, 477–479 (NAA), and Asp493.

The protein belongs to the chaperonin (HSP60) family. As to quaternary structure, forms a cylinder of 14 subunits composed of two heptameric rings stacked back-to-back. Interacts with the co-chaperonin GroES.

It is found in the cytoplasm. It carries out the reaction ATP + H2O + a folded polypeptide = ADP + phosphate + an unfolded polypeptide.. Its function is as follows. Together with its co-chaperonin GroES, plays an essential role in assisting protein folding. The GroEL-GroES system forms a nano-cage that allows encapsulation of the non-native substrate proteins and provides a physical environment optimized to promote and accelerate protein folding. This is Chaperonin GroEL from Campylobacter rectus (Wolinella recta).